Consider the following 1305-residue polypeptide: Nonribosomal peptide synthetase hkm11 (1305 aa).

The adenylation stretch occupies residues 278 to 672; it reads TYGELDRWAK…GEIEHHLRPK (395 aa). Residues 788–864 enclose the Carrier domain; it reads APTTEQEALL…SLASRMRQYN (77 aa). The residue at position 825 (serine 825) is an O-(pantetheine 4'-phosphoryl)serine. Positions 926 to 1166 are condensation; sequence KGQLDRHQLQ…LCLNITAVRV (241 aa).

This sequence belongs to the NRP synthetase family.

The catalysed reaction is hancockiamide D + (E)-cinnamate + ATP = hancockiamide A + AMP + diphosphate. It catalyses the reaction hancockiamide H + (E)-cinnamate + ATP = hancockiamide G + AMP + diphosphate. The protein operates within secondary metabolite biosynthesis. Its function is as follows. Nonribosomal peptide synthetase; part of the gene cluster that mediates the biosynthesis of hancockiamides, an unusual new family of N-cinnamoylated piperazines. The NRPS hkm10 and the NmrA-like reductase hkm9 are proposed to convert two molecules of L-Phe to the intermediary piperazine called xenocockiamide A. Xenocockiamide A is then converted to hancockiamide D via a series of hydroxylations and O-methylations. The tyrosinase hkm6 may catalyze an aromatic hydroxylation, then the 2-oxoglutarate-dependent Fe(II) dioxygenase hkm4 and the FAD-dependent phenol hydroxylase hkm7 may catalyze consecutive hydroxylations to install 2 more hydroxy groups, and the methyltransferase hkm8 probably catalyzes two methylations using 2 molecules of S-adenosyl-L-methionine (SAM). The NRPS hkm11 activates and transfers trans-cinnamate supplied by the PAL hkm12 to hancockiamide D and produces hancockiamide A. NRPS Hkm11 has the flexibility to tolerate the bulky hancockiamide G as a substrate and the absence of the acetyl-transferase hkm3 opens up the opportunity for hkm11 to introduce a second N-cinnamoyl moiety. The cytochrome P450 monooxygenase hkm5 catalyzes the methylenedioxy bridge formation, converting hancockiamide A into hancockiamide G. Hkm5 can also convert hancockiamide B into hancockiamide C, and hancockiamide D into hancockiamide H. The N-acetyltransferase hkm3 finally transfers an acetyl group to 1-N of piperazine, converting hancockiamide A into hancockiamide B and hancockiamide G into hancockiamide C. This chain is Nonribosomal peptide synthetase hkm11, found in Aspergillus hancockii.